The sequence spans 380 residues: Chaperone protein DnaJ (380 aa).

Residues 5–70 (DFYEVLGVSR…QKRAAYDQYG (66 aa)) form the J domain. The segment at 135–213 (GCEKDIEIPT…CHGDGRVQKT (79 aa)) adopts a CR-type zinc-finger fold. Zn(2+) contacts are provided by cysteine 148, cysteine 151, cysteine 165, cysteine 168, cysteine 187, cysteine 190, cysteine 201, and cysteine 204. 4 CXXCXGXG motif repeats span residues 148–155 (CEPCDGTG), 165–172 (CSTCHGQG), 187–194 (CPTCHGKG), and 201–208 (CNSCHGDG).

Belongs to the DnaJ family. As to quaternary structure, homodimer. Zn(2+) serves as cofactor.

It localises to the cytoplasm. In terms of biological role, participates actively in the response to hyperosmotic and heat shock by preventing the aggregation of stress-denatured proteins and by disaggregating proteins, also in an autonomous, DnaK-independent fashion. Unfolded proteins bind initially to DnaJ; upon interaction with the DnaJ-bound protein, DnaK hydrolyzes its bound ATP, resulting in the formation of a stable complex. GrpE releases ADP from DnaK; ATP binding to DnaK triggers the release of the substrate protein, thus completing the reaction cycle. Several rounds of ATP-dependent interactions between DnaJ, DnaK and GrpE are required for fully efficient folding. Also involved, together with DnaK and GrpE, in the DNA replication of plasmids through activation of initiation proteins. The polypeptide is Chaperone protein DnaJ (Aliivibrio salmonicida (strain LFI1238) (Vibrio salmonicida (strain LFI1238))).